We begin with the raw amino-acid sequence, 61 residues long: Conotoxin LiC32 (61 aa).

The signal sequence occupies residues Met1–Ala22. The propeptide occupies His23–Gln44. Residue Cys60 is modified to Cysteine amide.

It belongs to the conotoxin T superfamily. Post-translationally, contains 2 disulfide bonds that can be either 'C1-C3, C2-C4' or 'C1-C4, C2-C3', since these disulfide connectivities have been observed for conotoxins with cysteine framework V (for examples, see AC P0DQQ7 and AC P81755). As to expression, expressed by the venom duct.

The protein resides in the secreted. Has the ability to interact with the G-protein coupled somatostatin type 3 receptor (SSTR3). The ability was measured in competition binding experiments and the constant of inhibition (Ki) has been evaluated to be 3.5 uM. In Conus lividus (Livid cone), this protein is Conotoxin LiC32.